A 38-amino-acid polypeptide reads, in one-letter code: Large ribosomal subunit protein bL36 (38 aa).

This sequence belongs to the bacterial ribosomal protein bL36 family.

The sequence is that of Large ribosomal subunit protein bL36 from Chlorobaculum parvum (strain DSM 263 / NCIMB 8327) (Chlorobium vibrioforme subsp. thiosulfatophilum).